Here is a 535-residue protein sequence, read N- to C-terminus: Unconventional prefoldin RPB5 interactor 1 (535 aa).

Residue methionine 1 is modified to N-acetylmethionine. Disordered stretches follow at residues 1–23, 223–330, 352–383, and 412–431; these read MEAP…PALV, LLGE…VGDN, KNTT…QELP, and SRSR…AAEF. The segment covering 7–18 has biased composition (pro residues); the sequence is ETPPDPSPPSAP. Polar residues-rich tracts occupy residues 253–265 and 276–296; these read TNVN…TDSH and EPFS…SSSY. The span at 299 to 320 shows a compositional bias: acidic residues; it reads DDDDDDDDDDDDDNIDDDDGDN. Residue serine 372 is modified to Phosphoserine; by RPS6KB1. A Phosphothreonine modification is found at threonine 373. The span at 417–427 shows a compositional bias: polar residues; sequence NSVCSDTSESS. Residue serine 442 is modified to Phosphoserine.

The protein belongs to the RNA polymerase II subunit 5-mediating protein family. Homodimer. Component of the PAQosome complex which is responsible for the biogenesis of several protein complexes and which consists of R2TP complex members RUVBL1, RUVBL2, RPAP3 and PIH1D1, URI complex members PFDN2, PFDN6, PDRG1, UXT and URI1 as well as ASDURF, POLR2E and DNAAF10/WDR92. Interacts with POLR2E/RPB5, RUVBL2 and RUVBL1. Interacts with PFDN2, PFDN4 and STAP1; the interactions are phosphorylation-dependent and occur in a growth-dependent manner in the mitochondrion. Interacts with UXT. Interacts with PPP1CC; the interaction is phosphorylation-dependent and occurs in a growth factor-dependent manner. Interacts (via the middle C-terminal region) with GTF2F1 and GTF2F2. Interacts with DMAP1. Interacts with TSC1 and TSC2. Interacts with PRPF8 and EFTUD2 in a ZNHIT2-dependent manner. In terms of processing, phosphorylated. Phosphorylation occurs essentially on serine residues. Phosphorylation occurs in response to androgen treatment in prostate cancer cells in a mTOR-dependent manner. Phosphorylated; hyperhosphorylated in mitochondria in a mTORC-dependent signaling pathway. Phosphorylated at Ser-372 by RPS6KB1 in a growth factor- and rapamycin-dependent manner. S6K1-mediated mitochondrial phosphorylation at Ser-372 disrupts the URI1-PPP1CC complex in the mitochondrion, relieves PPP1CC phosphatase inhibition activity and hence engages a negative feedback diminishing RPS6KB1 kinase activity, preventing sustained S6K1-dependent signaling. As to expression, ubiquitous. Expressed in ovarian cancers (at protein level). Expressed strongly in skeletal muscle. Expressed weakly in brain, heart, pancreas and in prostate epithelial cells.

Its subcellular location is the nucleus. It is found in the cytoplasm. It localises to the mitochondrion. The protein localises to the cell projection. The protein resides in the dendrite. Its function is as follows. Involved in gene transcription regulation. Acts as a transcriptional repressor in concert with the corepressor UXT to regulate androgen receptor (AR) transcription. May act as a tumor suppressor to repress AR-mediated gene transcription and to inhibit anchorage-independent growth in prostate cancer cells. Required for cell survival in ovarian cancer cells. Together with UXT, associates with chromatin to the NKX3-1 promoter region. Antagonizes transcriptional modulation via hepatitis B virus X protein. In terms of biological role, plays a central role in maintaining S6K1 signaling and BAD phosphorylation under normal growth conditions thereby protecting cells from potential deleterious effects of sustained S6K1 signaling. The URI1-PPP1CC complex acts as a central component of a negative feedback mechanism that counteracts excessive S6K1 survival signaling to BAD in response to growth factors. Mediates inhibition of PPP1CC phosphatase activity in mitochondria. Coordinates the regulation of nutrient-sensitive gene expression availability in a mTOR-dependent manner. Seems to be a scaffolding protein able to assemble a prefoldin-like complex that contains PFDs and proteins with roles in transcription and ubiquitination. This Homo sapiens (Human) protein is Unconventional prefoldin RPB5 interactor 1 (URI1).